The sequence spans 132 residues: Large ribosomal subunit protein bL12 (132 aa).

The protein belongs to the bacterial ribosomal protein bL12 family. In terms of assembly, homodimer. Part of the ribosomal stalk of the 50S ribosomal subunit. Forms a multimeric L10(L12)X complex, where L10 forms an elongated spine to which 2 to 4 L12 dimers bind in a sequential fashion. Binds GTP-bound translation factors.

Functionally, forms part of the ribosomal stalk which helps the ribosome interact with GTP-bound translation factors. Is thus essential for accurate translation. In Prochlorococcus marinus (strain MIT 9211), this protein is Large ribosomal subunit protein bL12.